We begin with the raw amino-acid sequence, 620 residues long: LEAF RUST 10 DISEASE-RESISTANCE LOCUS RECEPTOR-LIKE PROTEIN KINASE-like 2.3 (620 aa).

The signal sequence occupies residues 1-30 (MDSLSSMGFQTASFFLILLFLFYHLPCVPS). The Extracellular portion of the chain corresponds to 31-256 (QQERSRLCKP…NNGTYSDNRP (226 aa)). N-linked (GlcNAc...) asparagine glycans are attached at residues asparagine 75, asparagine 85, asparagine 93, asparagine 132, asparagine 148, asparagine 162, asparagine 189, asparagine 231, and asparagine 248. A helical membrane pass occupies residues 257–277 (FLVTIGTVLGSILCVCVVLFL). Residues 278–620 (AFYLNERRIA…SVESSIYSEV (343 aa)) are Cytoplasmic-facing. The 283-residue stretch at 314 to 596 (KSFTEVVGRG…SLDPPPKPLL (283 aa)) folds into the Protein kinase domain. ATP-binding positions include 320 to 328 (VGRGGFGTV) and lysine 342. The active-site Proton acceptor is the aspartate 431. Residues 586–620 (DSLDPPPKPLLHMPMQNNNAESSQLSVESSIYSEV) are disordered. Residues 600–620 (MQNNNAESSQLSVESSIYSEV) are compositionally biased toward polar residues.

This sequence belongs to the protein kinase superfamily. Ser/Thr protein kinase family.

It localises to the membrane. It catalyses the reaction L-seryl-[protein] + ATP = O-phospho-L-seryl-[protein] + ADP + H(+). The catalysed reaction is L-threonyl-[protein] + ATP = O-phospho-L-threonyl-[protein] + ADP + H(+). In Arabidopsis thaliana (Mouse-ear cress), this protein is LEAF RUST 10 DISEASE-RESISTANCE LOCUS RECEPTOR-LIKE PROTEIN KINASE-like 2.3.